The primary structure comprises 476 residues: MNILFAVSECVPFVKSGGLADVAGALPKELKKLGVEVRIILPNYSLIPQKLRDGCTLHKVINVPLGWRNQYCGILKGEQDGITYYLIDNEYYFKRDSLYGHYDDGERFSYFSKAVLECIPHLDFEVDVLHSHDWHTAMVNFLLREKYQDNPLYEHIKTVYTIHNLQFQGVFPPEVMYDLLELGDEYFHSEQLEFYGNVNFMKGGIIASDQITAVSPTYKEEIQYEFFGEKLDGLLRKYNGKLSGIVNGIDTSVYNPETDSYITAQYDADSLYEKSKNKRALQRYFGLPEKEDTPIISMVTRLTKQKGLDLVRTVFREIMEEDVQCIILGSGDSEYEKFFEWMAYEYPEKVKVYIGFNEELAHQVYAGSDLFLMPSLFEPCGLGQLIALAYGTIPIVRETGGLNDTVQSYDEETGEGNGFSFTNFNAHDMLHTVRRAIEFYHDKPVWEQLVKQAMTEDYSWGKSALAYKKLYKSLME.

Position 15 (Lys15) interacts with ADP-alpha-D-glucose.

Belongs to the glycosyltransferase 1 family. Bacterial/plant glycogen synthase subfamily.

It carries out the reaction [(1-&gt;4)-alpha-D-glucosyl](n) + ADP-alpha-D-glucose = [(1-&gt;4)-alpha-D-glucosyl](n+1) + ADP + H(+). It functions in the pathway glycan biosynthesis; glycogen biosynthesis. Its function is as follows. Synthesizes alpha-1,4-glucan chains using ADP-glucose. This is Glycogen synthase from Bacillus cereus (strain ATCC 10987 / NRS 248).